Consider the following 235-residue polypeptide: uncharacterized protein (235 aa).

In terms of domain architecture, ABC transporter spans 2-235 (IKLKNVTKTY…EEKLRGFDDR (234 aa)). Residue 38 to 45 (GPSGSGKS) participates in ATP binding.

Belongs to the ABC transporter superfamily.

This is an uncharacterized protein from Methanocaldococcus jannaschii (strain ATCC 43067 / DSM 2661 / JAL-1 / JCM 10045 / NBRC 100440) (Methanococcus jannaschii).